The primary structure comprises 494 residues: Glutamate--tRNA ligase (494 aa).

The 'HIGH' region signature appears at Pro-10 to Thr-20. Zn(2+)-binding residues include Cys-107, Cys-109, Cys-134, and His-136. The short motif at Lys-251 to Arg-255 is the 'KMSKS' region element. Lys-254 contributes to the ATP binding site.

It belongs to the class-I aminoacyl-tRNA synthetase family. Glutamate--tRNA ligase type 1 subfamily. In terms of assembly, monomer. It depends on Zn(2+) as a cofactor.

It is found in the cytoplasm. It catalyses the reaction tRNA(Glu) + L-glutamate + ATP = L-glutamyl-tRNA(Glu) + AMP + diphosphate. Its function is as follows. Catalyzes the attachment of glutamate to tRNA(Glu) in a two-step reaction: glutamate is first activated by ATP to form Glu-AMP and then transferred to the acceptor end of tRNA(Glu). The sequence is that of Glutamate--tRNA ligase from Pseudomonas aeruginosa (strain UCBPP-PA14).